Here is a 358-residue protein sequence, read N- to C-terminus: CX3C chemokine receptor 1 (358 aa).

Residues 1–26 (MHTTLPESTSENFEYYDLAEACDMGD) lie on the Extracellular side of the membrane. The helical transmembrane segment at 27-47 (IVALGTVFVVILYSLVFAFGL) threads the bilayer. The Cytoplasmic portion of the chain corresponds to 48–68 (VGNLLVVFALINSQRSKSITD). A helical membrane pass occupies residues 69 to 89 (IYLLNLALSDLLFVATLPFWT). At 90–105 (HYVINEQGLHHATCKL) the chain is on the extracellular side. Cysteine 103 and cysteine 176 form a disulfide bridge. The chain crosses the membrane as a helical span at residues 106–126 (ITAFFFIGFFGGIFFITVISV). The Cytoplasmic portion of the chain corresponds to 127–147 (DRFLAIVLAANSMSNRTVQHG). The helical transmembrane segment at 148 to 168 (VTTSLGVWAAAILVATPQFMF) threads the bilayer. At 169–186 (TREKENECFGDYPEILQE) the chain is on the extracellular side. Residues 187 to 207 (IWPVILNTEINFLGFLLPLLI) traverse the membrane as a helical segment. At 208-232 (MSYCYFRIMQTLFSCKNHKKAKAIR) the chain is on the cytoplasmic side. The helical transmembrane segment at 233–253 (LIFLVVVVFFLFWTPYNVMIF) threads the bilayer. At 254-275 (LQTLNLYDFFPKCDVKRDLKLA) the chain is on the extracellular side. A helical membrane pass occupies residues 276–296 (ISVTETIAFSHCCLNPLIYAF). The Cytoplasmic segment spans residues 297-358 (AGEKFRRYLY…TSDGDASILL (62 aa)). A Phosphothreonine modification is found at threonine 349.

Belongs to the G-protein coupled receptor 1 family. As to quaternary structure, found in a ternary complex with CX3CL1 and ITGAV:ITGB3 or ITGA4:ITGB1. Post-translationally, this protein is not N-glycosylated which is unusual for G-protein-coupled receptors.

Its subcellular location is the cell membrane. Receptor for the C-X3-C chemokine fractalkine (CX3CL1) present on many early leukocyte cells; CX3CR1-CX3CL1 signaling exerts distinct functions in different tissue compartments, such as immune response, inflammation, cell adhesion and chemotaxis. CX3CR1-CX3CL1 signaling mediates cell migratory functions. Responsible for the recruitment of natural killer (NK) cells to inflamed tissues. Acts as a regulator of inflammation process leading to atherogenesis by mediating macrophage and monocyte recruitment to inflamed atherosclerotic plaques, promoting cell survival. Involved in airway inflammation by promoting interleukin 2-producing T helper (Th2) cell survival in inflamed lung. Involved in the migration of circulating monocytes to non-inflamed tissues, where they differentiate into macrophages and dendritic cells. Acts as a negative regulator of angiogenesis, probably by promoting macrophage chemotaxis. Plays a key role in brain microglia by regulating inflammatory response in the central nervous system (CNS) and regulating synapse maturation. Required to restrain the microglial inflammatory response in the CNS and the resulting parenchymal damage in response to pathological stimuli. Involved in brain development by participating in synaptic pruning, a natural process during which brain microglia eliminates extra synapses during postnatal development. Synaptic pruning by microglia is required to promote the maturation of circuit connectivity during brain development. Acts as an important regulator of the gut microbiota by controlling immunity to intestinal bacteria and fungi. Expressed in lamina propria dendritic cells in the small intestine, which form transepithelial dendrites capable of taking up bacteria in order to provide defense against pathogenic bacteria. Required to initiate innate and adaptive immune responses against dissemination of commensal fungi (mycobiota) component of the gut: expressed in mononuclear phagocytes (MNPs) and acts by promoting induction of antifungal IgG antibodies response to confer protection against disseminated C.albicans or C.auris infection. Also acts as a receptor for C-C motif chemokine CCL26, inducing cell chemotaxis. This chain is CX3C chemokine receptor 1, found in Bos taurus (Bovine).